Consider the following 198-residue polypeptide: Glycerol-3-phosphate acyltransferase (198 aa).

5 consecutive transmembrane segments (helical) span residues 2–22, 55–75, 88–108, 118–138, and 162–182; these read IIVI…TGYL, MITQ…CMLI, YLSI…FLGF, VGAF…VYFV, and IALR…GLLI.

It belongs to the PlsY family. In terms of assembly, probably interacts with PlsX.

The protein resides in the cell membrane. The catalysed reaction is an acyl phosphate + sn-glycerol 3-phosphate = a 1-acyl-sn-glycero-3-phosphate + phosphate. The protein operates within lipid metabolism; phospholipid metabolism. Catalyzes the transfer of an acyl group from acyl-phosphate (acyl-PO(4)) to glycerol-3-phosphate (G3P) to form lysophosphatidic acid (LPA). This enzyme utilizes acyl-phosphate as fatty acyl donor, but not acyl-CoA or acyl-ACP. The polypeptide is Glycerol-3-phosphate acyltransferase (Clostridium acetobutylicum (strain ATCC 824 / DSM 792 / JCM 1419 / IAM 19013 / LMG 5710 / NBRC 13948 / NRRL B-527 / VKM B-1787 / 2291 / W)).